A 119-amino-acid chain; its full sequence is Large ribosomal subunit protein bL20 (119 aa).

Belongs to the bacterial ribosomal protein bL20 family.

Binds directly to 23S ribosomal RNA and is necessary for the in vitro assembly process of the 50S ribosomal subunit. It is not involved in the protein synthesizing functions of that subunit. This Bacillus pumilus (strain SAFR-032) protein is Large ribosomal subunit protein bL20.